An 846-amino-acid polypeptide reads, in one-letter code: Sucrose synthase 6 (846 aa).

Residues 276–755 form a GT-B glycosyltransferase region; sequence CVFTVVIFSI…GLQRIYECYT (480 aa).

Belongs to the glycosyltransferase 1 family. Plant sucrose synthase subfamily.

The catalysed reaction is an NDP-alpha-D-glucose + D-fructose = a ribonucleoside 5'-diphosphate + sucrose + H(+). Sucrose-cleaving enzyme that provides UDP-glucose and fructose for various metabolic pathways. This chain is Sucrose synthase 6 (SUS6), found in Oryza sativa subsp. japonica (Rice).